A 476-amino-acid chain; its full sequence is Transcriptional regulator claA (476 aa).

The segment at residues 25 to 52 is a DNA-binding region (zn(2)-C6 fungal-type); the sequence is CDTCLKAKIKCSQAKPTCARCLQQGRQC. A disordered region spans residues 63–92; it reads PSTKNLPLDQLQQPKGRTAGGTARRSLSRR. Polar residues predominate over residues 64–77; that stretch reads STKNLPLDQLQQPK.

Its subcellular location is the nucleus. Transcriptional regulator; part of the cla gene cluster that produces clavatol and ortho-quinone methide. The clavatol biosynthesis cluster cla and the terrestric acid cluster tra are both involved in the production of peniphenones and penilactones. This chain is Transcriptional regulator claA, found in Penicillium crustosum (Blue mold fungus).